A 316-amino-acid polypeptide reads, in one-letter code: Ribosomal RNA large subunit methyltransferase F (316 aa).

A disordered region spans residues 200-222 (EEANKSTSRKVSNLNPKEKKNTN). Positions 204-214 (KSTSRKVSNLN) are enriched in polar residues.

This sequence belongs to the methyltransferase superfamily. METTL16/RlmF family.

The protein resides in the cytoplasm. It catalyses the reaction adenosine(1618) in 23S rRNA + S-adenosyl-L-methionine = N(6)-methyladenosine(1618) in 23S rRNA + S-adenosyl-L-homocysteine + H(+). Specifically methylates the adenine in position 1618 of 23S rRNA. In Flavobacterium johnsoniae (strain ATCC 17061 / DSM 2064 / JCM 8514 / BCRC 14874 / CCUG 350202 / NBRC 14942 / NCIMB 11054 / UW101) (Cytophaga johnsonae), this protein is Ribosomal RNA large subunit methyltransferase F.